Consider the following 506-residue polypeptide: ATP synthase subunit alpha (506 aa).

Residue 170-177 coordinates ATP; it reads GDRQTGKT.

Belongs to the ATPase alpha/beta chains family. F-type ATPases have 2 components, CF(1) - the catalytic core - and CF(0) - the membrane proton channel. CF(1) has five subunits: alpha(3), beta(3), gamma(1), delta(1), epsilon(1). CF(0) has four main subunits: a(1), b(1), b'(1) and c(9-12).

Its subcellular location is the cellular thylakoid membrane. It carries out the reaction ATP + H2O + 4 H(+)(in) = ADP + phosphate + 5 H(+)(out). In terms of biological role, produces ATP from ADP in the presence of a proton gradient across the membrane. The alpha chain is a regulatory subunit. The protein is ATP synthase subunit alpha of Synechococcus sp. (strain JA-2-3B'a(2-13)) (Cyanobacteria bacterium Yellowstone B-Prime).